Consider the following 290-residue polypeptide: BEL1-like homeodomain protein 11 (290 aa).

Residues 20 to 36 are SR/KY domain; the sequence is SRYAKAVQCLVEEVIDI. The interval 81-152 is BELL domain; sequence ENHEIHIKIT…SLEEAIISQL (72 aa). A DNA-binding region (homeobox) is located at residues 202 to 264; that stretch reads AWKPIRGLPE…NARVRLWKPM (63 aa).

This sequence belongs to the TALE/BELL homeobox family. In terms of assembly, may form heterodimeric complexes with TALE/KNOX proteins.

Its subcellular location is the nucleus. This is BEL1-like homeodomain protein 11 (BLH11) from Arabidopsis thaliana (Mouse-ear cress).